The chain runs to 265 residues: Protein Rv2993c (265 aa).

A divalent metal cation is bound by residues E114, E116, and D145.

This sequence in the C-terminal section; belongs to the FAH family. The cofactor is a divalent metal cation.

The polypeptide is Protein Rv2993c (Mycobacterium tuberculosis (strain ATCC 25618 / H37Rv)).